The following is a 915-amino-acid chain: Protein inturned (915 aa).

The tract at residues 88–144 (NAKRQANSSNKSEAKLKKLTKILRRKRRPSQRKAEGKDSSQRPASILKNQAGQRPGV) is disordered. The span at 104–118 (KKLTKILRRKRRPSQ) shows a compositional bias: basic residues. Residues 128 to 139 (QRPASILKNQAG) show a composition bias toward polar residues. The 89-residue stretch at 165 to 253 (SVSSSSADRG…PMQVRLTLET (89 aa)) folds into the PDZ domain. The disordered stretch occupies residues 688 to 738 (GIRGRRASPQRSQSDSGSEGHADGTPASVARRDSLGSGGSDGSLGSAGFLK).

Belongs to the inturned family.

It is found in the cytoplasm. The protein resides in the cell surface. Its subcellular location is the cytoskeleton. It localises to the cilium basal body. Functionally, plays a key role in ciliogenesis and embryonic development. Regulator of cilia formation by controlling the organization of the apical actin cytoskeleton and the positioning of the basal bodies at the apical cell surface, which in turn is essential for the normal orientation of elongating ciliary microtubules. Plays a key role in definition of cell polarity via its role in ciliogenesis but not via conversion extension. Has an indirect effect on hedgehog signaling. The chain is Protein inturned (intu) from Danio rerio (Zebrafish).